A 211-amino-acid chain; its full sequence is Thiamine-phosphate synthase (211 aa).

Residues 37 to 41 (QLRIK) and asparagine 69 each bind 4-amino-2-methyl-5-(diphosphooxymethyl)pyrimidine. Mg(2+)-binding residues include aspartate 70 and aspartate 89. Serine 108 contributes to the 4-amino-2-methyl-5-(diphosphooxymethyl)pyrimidine binding site. A 2-[(2R,5Z)-2-carboxy-4-methylthiazol-5(2H)-ylidene]ethyl phosphate-binding site is contributed by 134–136 (TQT). Lysine 137 contributes to the 4-amino-2-methyl-5-(diphosphooxymethyl)pyrimidine binding site. Residues glycine 166 and 186-187 (VS) contribute to the 2-[(2R,5Z)-2-carboxy-4-methylthiazol-5(2H)-ylidene]ethyl phosphate site.

Belongs to the thiamine-phosphate synthase family. Requires Mg(2+) as cofactor.

It catalyses the reaction 2-[(2R,5Z)-2-carboxy-4-methylthiazol-5(2H)-ylidene]ethyl phosphate + 4-amino-2-methyl-5-(diphosphooxymethyl)pyrimidine + 2 H(+) = thiamine phosphate + CO2 + diphosphate. The enzyme catalyses 2-(2-carboxy-4-methylthiazol-5-yl)ethyl phosphate + 4-amino-2-methyl-5-(diphosphooxymethyl)pyrimidine + 2 H(+) = thiamine phosphate + CO2 + diphosphate. The catalysed reaction is 4-methyl-5-(2-phosphooxyethyl)-thiazole + 4-amino-2-methyl-5-(diphosphooxymethyl)pyrimidine + H(+) = thiamine phosphate + diphosphate. It participates in cofactor biosynthesis; thiamine diphosphate biosynthesis; thiamine phosphate from 4-amino-2-methyl-5-diphosphomethylpyrimidine and 4-methyl-5-(2-phosphoethyl)-thiazole: step 1/1. Condenses 4-methyl-5-(beta-hydroxyethyl)thiazole monophosphate (THZ-P) and 2-methyl-4-amino-5-hydroxymethyl pyrimidine pyrophosphate (HMP-PP) to form thiamine monophosphate (TMP). The chain is Thiamine-phosphate synthase from Salmonella paratyphi B (strain ATCC BAA-1250 / SPB7).